The chain runs to 395 residues: Probable L-tyrosine/L-aspartate decarboxylase (395 aa).

Lysine 242 is modified (N6-(pyridoxal phosphate)lysine).

The protein belongs to the group II decarboxylase family. MfnA subfamily. Requires pyridoxal 5'-phosphate as cofactor.

The enzyme catalyses L-tyrosine + H(+) = tyramine + CO2. It carries out the reaction L-aspartate + H(+) = beta-alanine + CO2. Its pathway is cofactor biosynthesis; methanofuran biosynthesis. It participates in cofactor biosynthesis; coenzyme A biosynthesis. Its function is as follows. Catalyzes the decarboxylation of L-tyrosine to produce tyramine for methanofuran biosynthesis. Can also catalyze the decarboxylation of L-aspartate to produce beta-alanine for coenzyme A (CoA) biosynthesis. In Methanosarcina barkeri (strain Fusaro / DSM 804), this protein is Probable L-tyrosine/L-aspartate decarboxylase.